A 271-amino-acid polypeptide reads, in one-letter code: Thermoregulatory protein LcrF (271 aa).

Residues 167-265 enclose the HTH araC/xylS-type domain; the sequence is ERLQKFMEEN…GCTPSQARLT (99 aa). DNA-binding regions (H-T-H motif) lie at residues 184-205 and 232-255; these read SKFAREFGMGLTTFKELFGTVY and IVDIAMEAGFSSQSYFTQSYRRRF.

Transcriptional activator of the thermally regulated virulent yopE gene. LcrF activity could be modulated by the interaction with an inducer molecule serving as a temperature messenger. The availability of the messenger would in turn be controlled by a temperature-responsive process serving as a cellular thermometer. This chain is Thermoregulatory protein LcrF (lcrF), found in Yersinia pestis.